A 93-amino-acid polypeptide reads, in one-letter code: Integration host factor subunit beta (93 aa).

This sequence belongs to the bacterial histone-like protein family. Heterodimer of an alpha and a beta chain.

This protein is one of the two subunits of integration host factor, a specific DNA-binding protein that functions in genetic recombination as well as in transcriptional and translational control. This is Integration host factor subunit beta from Haemophilus ducreyi (strain 35000HP / ATCC 700724).